A 48-amino-acid chain; its full sequence is uncharacterized protein (48 aa).

The disordered stretch occupies residues 1–48 (MLFCNNNNNNNNNNNNNNNNNNNNNNNNNNNNNNNNNNNSSNNNNFSR).

This is an uncharacterized protein from Dictyostelium discoideum (Social amoeba).